A 201-amino-acid polypeptide reads, in one-letter code: Regulator of G-protein signaling rgs-1 (201 aa).

The region spanning 37 to 156 (SWQQSFDTLM…FLTSIFYRET (120 aa)) is the RGS domain. The interval 168-201 (GGDEEKEREQRAERARLNVPATAAEGSSKDISMV) is disordered. Positions 170-183 (DEEKEREQRAERAR) are enriched in basic and acidic residues.

In terms of tissue distribution, expressed in most or all neurons.

Its function is as follows. Inhibits G protein signaling in nervous system, interacting preferentially with the G(O) subfamily member goa-1. In vitro, protein acts as a GTPase activator of goa-1. Rgs-1 and rgs-2 redundantly adjust signaling when worms are fed to allow rapid induction of egg-laying behavior. The chain is Regulator of G-protein signaling rgs-1 (rgs-1) from Caenorhabditis elegans.